A 254-amino-acid chain; its full sequence is Phosphoribosylaminoimidazole-succinocarboxamide synthase (254 aa).

Belongs to the SAICAR synthetase family.

The enzyme catalyses 5-amino-1-(5-phospho-D-ribosyl)imidazole-4-carboxylate + L-aspartate + ATP = (2S)-2-[5-amino-1-(5-phospho-beta-D-ribosyl)imidazole-4-carboxamido]succinate + ADP + phosphate + 2 H(+). The protein operates within purine metabolism; IMP biosynthesis via de novo pathway; 5-amino-1-(5-phospho-D-ribosyl)imidazole-4-carboxamide from 5-amino-1-(5-phospho-D-ribosyl)imidazole-4-carboxylate: step 1/2. The sequence is that of Phosphoribosylaminoimidazole-succinocarboxamide synthase from Rhizobium meliloti (strain 1021) (Ensifer meliloti).